The sequence spans 266 residues: Glucosamine-6-phosphate deaminase (266 aa).

D72 acts as the Proton acceptor; for enolization step in catalysis. Catalysis depends on D141, which acts as the For ring-opening step. The active-site Proton acceptor; for ring-opening step is the H143. Residue E148 is the For ring-opening step of the active site.

Belongs to the glucosamine/galactosamine-6-phosphate isomerase family. NagB subfamily. Homohexamer; trimer of disulfide-linked dimers.

It carries out the reaction alpha-D-glucosamine 6-phosphate + H2O = beta-D-fructose 6-phosphate + NH4(+). It participates in amino-sugar metabolism; N-acetylneuraminate degradation; D-fructose 6-phosphate from N-acetylneuraminate: step 5/5. Its activity is regulated as follows. Allosterically activated by N-acetylglucosamine 6-phosphate (GlcNAc6P). Functionally, catalyzes the reversible isomerization-deamination of glucosamine 6-phosphate (GlcN6P) to form fructose 6-phosphate (Fru6P) and ammonium ion. This chain is Glucosamine-6-phosphate deaminase, found in Vibrio parahaemolyticus serotype O3:K6 (strain RIMD 2210633).